Here is a 643-residue protein sequence, read N- to C-terminus: Phosphatidylinositol-3,5-bisphosphate 3-phosphatase MTMR2 (643 aa).

Composition is skewed to polar residues over residues 1–12 (MEKSSSCESLGS) and 23–40 (DSLS…VHTK). The disordered stretch occupies residues 1–54 (MEKSSSCESLGSQPAVARPPSVDSLSSASTSHSENSVHTKSASVVSSDSISTSA). Ser6 and Ser9 each carry phosphoserine. A compositionally biased stretch (low complexity) spans 41-54 (SASVVSSDSISTSA). A Phosphoserine modification is found at Ser58. The 72-residue stretch at 68–139 (NKLAEMEEPP…GVISRVEKIG (72 aa)) folds into the GRAM domain. Residues 205 to 580 (GWKLYDSLSE…RHLELWVGYY (376 aa)) enclose the Myotubularin phosphatase domain. Residues Asn330, Asn355, and Ile356 each coordinate a 1,2-diacyl-sn-glycero-3-phospho-(1D-myo-inositol-3,5-bisphosphate). 3 residues coordinate a 1,2-diacyl-sn-glycero-3-phospho-(1D-myo-inositol-3-phosphate): Asn330, Asn355, and Ile356. The active-site Phosphocysteine intermediate is the Cys417. Ser418, Asp419, Gly420, Trp421, Asp422, Arg423, Arg459, and Arg463 together coordinate a 1,2-diacyl-sn-glycero-3-phospho-(1D-myo-inositol-3,5-bisphosphate). Positions 418, 419, 420, 421, 422, and 423 each coordinate a 1,2-diacyl-sn-glycero-3-phospho-(1D-myo-inositol-3-phosphate). Arg463 provides a ligand contact to a 1,2-diacyl-sn-glycero-3-phospho-(1D-myo-inositol-3-phosphate). Residues 593-627 (IHNRYKELLAKRAELQKKVEELQREISNRSTSSSE) are a coiled coil. The disordered stretch occupies residues 614–643 (LQREISNRSTSSSERAGSPAQCVTPVQTVV).

The protein belongs to the protein-tyrosine phosphatase family. Non-receptor class myotubularin subfamily. As to quaternary structure, homodimer (via coiled-coil domain). Heterotetramer consisting of one MTMR2 dimer and one SBF2/MTMR13 dimer; specifically in peripheral nerves stabilizes SBF2/MTMR13 at the membranes and increases MTMR2 catalytic activity towards phosphatidylinositol 3,5-bisphosphate and to a lesser extent towards phosphatidylinositol 3-phosphate. Heterodimer with SBF1/MTMR5; acts as an adapter for the phosphatase MTMR2 to regulate MTMR2 catalytic activity and subcellular location. Heterodimer with MTMR12. Phosphorylation at Ser-58 decreases MTMR2 localization to endocytic vesicular structures.

Its subcellular location is the cytoplasm. The protein localises to the early endosome membrane. The protein resides in the perinuclear region. It is found in the cell projection. It localises to the axon. Its subcellular location is the endosome membrane. The catalysed reaction is a 1,2-diacyl-sn-glycero-3-phospho-(1D-myo-inositol-3,5-bisphosphate) + H2O = a 1,2-diacyl-sn-glycero-3-phospho-(1D-myo-inositol-5-phosphate) + phosphate. It catalyses the reaction a 1,2-diacyl-sn-glycero-3-phospho-(1D-myo-inositol-3-phosphate) + H2O = a 1,2-diacyl-sn-glycero-3-phospho-(1D-myo-inositol) + phosphate. It carries out the reaction 1,2-dioctanoyl-sn-glycero-3-phospho-(1-D-myo-inositol-3-phosphate) + H2O = 1,2-dioctanoyl-sn-glycero-3-phospho-(1D-myo-inositol) + phosphate. The enzyme catalyses 1,2-dioctanoyl-sn-glycero-3-phospho-(1D-myo-inositol-3,5-bisphosphate) + H2O = 1,2-dioctanoyl-sn-glycero-3-phospho-(1D-myo-inositol-5-phosphate) + phosphate. Its function is as follows. Lipid phosphatase that specifically dephosphorylates the D-3 position of phosphatidylinositol 3-phosphate and phosphatidylinositol 3,5-bisphosphate, generating phosphatidylinositol and phosphatidylinositol 5-phosphate. Regulates the level of these phosphoinositides critical for various biological processes including autophagy initiation and autophagosome maturation. This Bos taurus (Bovine) protein is Phosphatidylinositol-3,5-bisphosphate 3-phosphatase MTMR2.